The following is a 268-amino-acid chain: Putative hydro-lyase ACICU_01268 (268 aa).

The protein belongs to the D-glutamate cyclase family.

In Acinetobacter baumannii (strain ACICU), this protein is Putative hydro-lyase ACICU_01268.